The following is a 229-amino-acid chain: uncharacterized protein (229 aa).

Residues 61 to 229 are disordered; the sequence is MQAEDKVSKP…TESEDKPKRG (169 aa). A compositionally biased stretch (basic and acidic residues) spans 109-128; it reads QQEKQQPEKAVVEQQEKQQP. Residues 166 to 194 show a composition bias toward low complexity; sequence QPEQPERQQQAQPERQQQAQPERQQQAQP. Acidic residues predominate over residues 195-204; it reads EEAEDAEQEP. The segment covering 218–229 has biased composition (basic and acidic residues); that stretch reads TQTESEDKPKRG.

This is an uncharacterized protein from Frog virus 3 (isolate Goorha) (FV-3).